Here is a 393-residue protein sequence, read N- to C-terminus: L-methionine gamma-lyase (393 aa).

Pyridoxal 5'-phosphate is bound by residues 63–65 (YQR) and 93–94 (GM). Residue tyrosine 119 participates in L-homocysteine binding. Residue 206–208 (SAT) participates in pyridoxal 5'-phosphate binding. Lysine 209 bears the N6-(pyridoxal phosphate)lysine mark. Arginine 367 contributes to the L-homocysteine binding site. An L-methionine-binding site is contributed by arginine 367.

This sequence belongs to the trans-sulfuration enzymes family. L-methionine gamma-lyase subfamily. Homotetramer. It depends on pyridoxal 5'-phosphate as a cofactor.

It carries out the reaction L-methionine + H2O = methanethiol + 2-oxobutanoate + NH4(+). It catalyses the reaction L-homocysteine + H2O = 2-oxobutanoate + hydrogen sulfide + NH4(+) + H(+). Catalyzes the alpha,gamma-elimination of L-methionine to produce methanethiol, 2-oxobutanoate and ammonia. Is also able to catalyze the alpha,gamma-elimination of L-homocysteine. The chain is L-methionine gamma-lyase from Brevibacterium sandarakinum.